Reading from the N-terminus, the 442-residue chain is UDP-N-acetylmuramoylalanine--D-glutamate ligase (442 aa).

Position 113 to 119 (113 to 119) interacts with ATP; that stretch reads GSNGKTT.

Belongs to the MurCDEF family.

The protein localises to the cytoplasm. It catalyses the reaction UDP-N-acetyl-alpha-D-muramoyl-L-alanine + D-glutamate + ATP = UDP-N-acetyl-alpha-D-muramoyl-L-alanyl-D-glutamate + ADP + phosphate + H(+). The protein operates within cell wall biogenesis; peptidoglycan biosynthesis. In terms of biological role, cell wall formation. Catalyzes the addition of glutamate to the nucleotide precursor UDP-N-acetylmuramoyl-L-alanine (UMA). The chain is UDP-N-acetylmuramoylalanine--D-glutamate ligase from Coxiella burnetii (strain CbuG_Q212) (Coxiella burnetii (strain Q212)).